Reading from the N-terminus, the 141-residue chain is N,N-dimethylformamidase alpha subunit (141 aa).

Heterotetramer of two DmfA1 (alpha) and two DmfA2 (beta) subunits.

The catalysed reaction is N,N-dimethylformamide + H2O = dimethylamine + formate. Hydrolyzes N,N-dimethylformamide, and to a lesser extent N,N-dimethylacetamide and N,N-diethylacetamide. Has no activity against the substituted amides N-methylformamide, N-ethylformamide, N-ethylformamide and N-methylacetamide or the unsubstituted amides formamide, nicotinamide, acetoamide, benzamide, acetamide and acrylamide. This Paracoccus aminophilus protein is N,N-dimethylformamidase alpha subunit.